Consider the following 132-residue polypeptide: 3-aminoacrylate deaminase RutC (132 aa).

This sequence belongs to the RutC family.

It catalyses the reaction (Z)-3-aminoacrylate + H2O + H(+) = 3-oxopropanoate + NH4(+). Functionally, involved in pyrimidine catabolism. Catalyzes the deamination of 3-aminoacrylate to malonic semialdehyde, a reaction that can also occur spontaneously. RutC may facilitate the reaction and modulate the metabolic fitness, rather than catalyzing essential functions. This is 3-aminoacrylate deaminase RutC from Cronobacter sakazakii (strain ATCC BAA-894) (Enterobacter sakazakii).